The sequence spans 255 residues: 5-oxoprolinase subunit A (255 aa).

Belongs to the LamB/PxpA family. As to quaternary structure, forms a complex composed of PxpA, PxpB and PxpC.

It catalyses the reaction 5-oxo-L-proline + ATP + 2 H2O = L-glutamate + ADP + phosphate + H(+). Functionally, catalyzes the cleavage of 5-oxoproline to form L-glutamate coupled to the hydrolysis of ATP to ADP and inorganic phosphate. This Clostridium beijerinckii (strain ATCC 51743 / NCIMB 8052) (Clostridium acetobutylicum) protein is 5-oxoprolinase subunit A.